The following is a 459-amino-acid chain: Vanillin aminotransferase (459 aa).

Pyridoxal 5'-phosphate-binding positions include 115–116 (GS) and Asp255. Position 284 is an N6-(pyridoxal phosphate)lysine (Lys284). Pyridoxal 5'-phosphate is bound at residue 320-321 (FT). Residues 430 to 457 (LEELDELIRIYGKALKDTEKRVEELKSQ) adopt a coiled-coil conformation.

This sequence belongs to the class-III pyridoxal-phosphate-dependent aminotransferase family. As to expression, confined to the placenta of green fruits at high levels. Barely detectable in the pericarp and seeds as well as in the placenta of mature fruits.

The catalysed reaction is vanillin + L-alanine = vanillylamine + pyruvate. It participates in aromatic compound metabolism; phenylpropanoid biosynthesis. Involved in the biosynthesis of capsaicinoids natural products, pungent alkaloids synthesized from phenylpropanoid intermediates in the placental tissue of chili pepper fruit acting as repellant on herbivorous mammals and conferring spiciness to hot peppers. Can transfer an amine from vanillylamine to pyruvate forming vanillin and L-alanine. This chain is Vanillin aminotransferase, found in Capsicum annuum (Capsicum pepper).